The primary structure comprises 358 residues: Mesaconyl-CoA hydratase (358 aa).

It belongs to the enoyl-CoA hydratase/isomerase family. In terms of assembly, homodimer.

It carries out the reaction (2R,3S)-beta-methylmalyl-CoA = 2-methylfumaryl-CoA + H2O. With respect to regulation, shows highest activity at 0.5 M KCl. Does not require divalent ions for activity. Functionally, involved in the methylaspartate cycle. Catalyzes the reversible hydration of mesaconyl-CoA (2-methylfumaryl-CoA) to yield beta-methylmalyl-CoA ((2R,3S)-beta-methylmalyl-CoA). Also shows activity with mesaconyl-C4-CoA (3-methylfumaryl-CoA), (S)-citramalyl-CoA and (S)-malyl-CoA. The polypeptide is Mesaconyl-CoA hydratase (Haloarcula hispanica (strain ATCC 33960 / DSM 4426 / JCM 8911 / NBRC 102182 / NCIMB 2187 / VKM B-1755)).